The chain runs to 499 residues: Glutamyl-tRNA(Gln) amidotransferase subunit A (499 aa).

Catalysis depends on charge relay system residues K75 and S150. Residue S174 is the Acyl-ester intermediate of the active site.

Belongs to the amidase family. GatA subfamily. Heterotrimer of A, B and C subunits.

The enzyme catalyses L-glutamyl-tRNA(Gln) + L-glutamine + ATP + H2O = L-glutaminyl-tRNA(Gln) + L-glutamate + ADP + phosphate + H(+). Allows the formation of correctly charged Gln-tRNA(Gln) through the transamidation of misacylated Glu-tRNA(Gln) in organisms which lack glutaminyl-tRNA synthetase. The reaction takes place in the presence of glutamine and ATP through an activated gamma-phospho-Glu-tRNA(Gln). The polypeptide is Glutamyl-tRNA(Gln) amidotransferase subunit A (Ralstonia pickettii (strain 12J)).